Consider the following 268-residue polypeptide: Phosphate import ATP-binding protein PstB 2 (268 aa).

The 242-residue stretch at 22–263 (MALTGVNFYY…PKVKRTEDYI (242 aa)) folds into the ABC transporter domain. 54–61 (GPSGCGKS) is an ATP binding site.

This sequence belongs to the ABC transporter superfamily. Phosphate importer (TC 3.A.1.7) family. In terms of assembly, the complex is composed of two ATP-binding proteins (PstB), two transmembrane proteins (PstC and PstA) and a solute-binding protein (PstS).

Its subcellular location is the cell inner membrane. The catalysed reaction is phosphate(out) + ATP + H2O = ADP + 2 phosphate(in) + H(+). Its function is as follows. Part of the ABC transporter complex PstSACB involved in phosphate import. Responsible for energy coupling to the transport system. The protein is Phosphate import ATP-binding protein PstB 2 of Rhizobium johnstonii (strain DSM 114642 / LMG 32736 / 3841) (Rhizobium leguminosarum bv. viciae).